We begin with the raw amino-acid sequence, 939 residues long: Vacuolar membrane protease (939 aa).

Residues 1 to 11 (MGFNSIFKFRK) lie on the Cytoplasmic side of the membrane. Residues 12 to 32 (TSLSLLLFAVYFIIGILYFID) traverse the membrane as a helical segment. Residues 33 to 356 (KTRYKHSLPI…TFVAIPSTKL (324 aa)) lie on the Vacuolar side of the membrane. N-linked (GlcNAc...) asparagine glycans are attached at residues asparagine 59, asparagine 88, and asparagine 114. Residues histidine 149 and aspartate 161 each coordinate Zn(2+). Residue glutamate 193 is the Proton acceptor of the active site. Positions 194, 219, and 293 each coordinate Zn(2+). N-linked (GlcNAc...) asparagine glycosylation occurs at asparagine 326. A helical membrane pass occupies residues 357–377 (FWINIALLIIMPIISIFLFSI). Residues 378–388 (VKKYNNEIIDS) lie on the Cytoplasmic side of the membrane. The chain crosses the membrane as a helical span at residues 389–409 (GNIWWRLPISAMSSGTIIIFT). Over 410–424 (TKLIMKWNPYILSRN) the chain is Vacuolar. A helical transmembrane segment spans residues 425–445 (FLLPLIGLTFEFIILNSYILT). Over 446–453 (MFENLSSS) the chain is Cytoplasmic. The helical transmembrane segment at 454–474 (FDFKTIAINEISFLFWIVLAY) threads the bilayer. The Vacuolar portion of the chain corresponds to 475-491 (QTWKLYDNNYQNTGIYP). The helical transmembrane segment at 492–512 (FTICYIVMATAGNIGYLFLIF) threads the bilayer. Topologically, residues 513-588 (KNIEIVEDEE…NQRTILKESK (76 aa)) are cytoplasmic. Positions 540 to 552 (YRDEINGRDDSSR) are enriched in basic and acidic residues. Positions 540-561 (YRDEINGRDDSSRDSNSASIPT) are disordered. The helical transmembrane segment at 589-609 (LVYNYDWIIEFLLVVPFSTFL) threads the bilayer. Topologically, residues 610–636 (LYNSLELIMDAVNQTIQETGDLYKVYK) are vacuolar. N-linked (GlcNAc...) asparagine glycosylation is present at asparagine 622. A helical membrane pass occupies residues 637–657 (ILAIGSILISIPTLPFAYKIG). Over 658–663 (CQLGKT) the chain is Cytoplasmic. Residues 664 to 684 (LTFISIGCLLISMALAPFTEM) traverse the membrane as a helical segment. The Vacuolar segment spans residues 685–939 (NPIKFRFMQV…LVKLTEAMVL (255 aa)). N-linked (GlcNAc...) asparagine glycosylation is found at asparagine 810 and asparagine 820.

It belongs to the peptidase M28 family. The cofactor is Zn(2+).

The protein resides in the vacuole membrane. Functionally, may be involved in vacuolar sorting and osmoregulation. This chain is Vacuolar membrane protease, found in Vanderwaltozyma polyspora (strain ATCC 22028 / DSM 70294 / BCRC 21397 / CBS 2163 / NBRC 10782 / NRRL Y-8283 / UCD 57-17) (Kluyveromyces polysporus).